The primary structure comprises 794 residues: DNA ligase (794 aa).

NAD(+) contacts are provided by residues 35 to 39 (DAEYD), 84 to 85 (SL), and Glu-126. The active-site N6-AMP-lysine intermediate is the Lys-128. Residues Arg-149, Glu-186, Lys-302, and Lys-326 each coordinate NAD(+). Positions 420, 423, 450, and 456 each coordinate Zn(2+). One can recognise a BRCT domain in the interval 711–794 (VEGLPLAGQT…KLLDEYGVAH (84 aa)).

This sequence belongs to the NAD-dependent DNA ligase family. LigA subfamily. Mg(2+) serves as cofactor. It depends on Mn(2+) as a cofactor.

It carries out the reaction NAD(+) + (deoxyribonucleotide)n-3'-hydroxyl + 5'-phospho-(deoxyribonucleotide)m = (deoxyribonucleotide)n+m + AMP + beta-nicotinamide D-nucleotide.. Its function is as follows. DNA ligase that catalyzes the formation of phosphodiester linkages between 5'-phosphoryl and 3'-hydroxyl groups in double-stranded DNA using NAD as a coenzyme and as the energy source for the reaction. It is essential for DNA replication and repair of damaged DNA. This Pseudomonas paraeruginosa (strain DSM 24068 / PA7) (Pseudomonas aeruginosa (strain PA7)) protein is DNA ligase.